The sequence spans 107 residues: Auxin-responsive protein SAUR50 (107 aa).

It belongs to the ARG7 family. As to quaternary structure, interacts with BZR1. In terms of tissue distribution, expressed in cotyledons, leaves, flowers and siliques.

The protein resides in the cell membrane. Its function is as follows. Provide a mechanistic link between auxin and plasma membrane H(+)-ATPases (PM H(+)-ATPases, e.g. AHA1 and AHA2), and triggers PM H(+)-ATPases activity by promoting phosphorylation of their C-terminal autoinhibitory domain as a result of PP2C-D subfamily of type 2C phosphatases inhibition, thus leading to the acidification of the apoplast and the facilitation of solutes and water uptake to drive cell expansion. Triggers plant growth probably by promoting cell elongation. Regulates branch angles and bending. Effector of hormonal and environmental signals in plant growth. This is Auxin-responsive protein SAUR50 from Arabidopsis thaliana (Mouse-ear cress).